The chain runs to 475 residues: Ribulose bisphosphate carboxylase large chain (475 aa).

The propeptide occupies 1–2 (MS). Residue Pro3 is modified to N-acetylproline. An N6,N6,N6-trimethyllysine modification is found at Lys14. Asn123 and Thr173 together coordinate substrate. Catalysis depends on Lys175, which acts as the Proton acceptor. Lys177 serves as a coordination point for substrate. The Mg(2+) site is built by Lys201, Asp203, and Glu204. Position 201 is an N6-carboxylysine (Lys201). His294 (proton acceptor) is an active-site residue. Positions 295, 327, and 379 each coordinate substrate.

The protein belongs to the RuBisCO large chain family. Type I subfamily. In terms of assembly, heterohexadecamer of 8 large chains and 8 small chains; disulfide-linked. The disulfide link is formed within the large subunit homodimers. Mg(2+) serves as cofactor. The disulfide bond which can form in the large chain dimeric partners within the hexadecamer appears to be associated with oxidative stress and protein turnover.

It is found in the plastid. The protein resides in the chloroplast. It carries out the reaction 2 (2R)-3-phosphoglycerate + 2 H(+) = D-ribulose 1,5-bisphosphate + CO2 + H2O. The enzyme catalyses D-ribulose 1,5-bisphosphate + O2 = 2-phosphoglycolate + (2R)-3-phosphoglycerate + 2 H(+). RuBisCO catalyzes two reactions: the carboxylation of D-ribulose 1,5-bisphosphate, the primary event in carbon dioxide fixation, as well as the oxidative fragmentation of the pentose substrate in the photorespiration process. Both reactions occur simultaneously and in competition at the same active site. The sequence is that of Ribulose bisphosphate carboxylase large chain from Stellaria media (Common chickweed).